The sequence spans 408 residues: Elongation factor Tu (408 aa).

A tr-type G domain is found at 10–219 (KTHVNVGTIG…ALDTYIPDPV (210 aa)). GTP-binding positions include 19–26 (GHVDHGKT), 88–92 (DCPGH), and 143–146 (NKCD). T26 contacts Mg(2+).

This sequence belongs to the TRAFAC class translation factor GTPase superfamily. Classic translation factor GTPase family. EF-Tu/EF-1A subfamily. Monomer.

The protein resides in the cytoplasm. The enzyme catalyses GTP + H2O = GDP + phosphate + H(+). GTP hydrolase that promotes the GTP-dependent binding of aminoacyl-tRNA to the A-site of ribosomes during protein biosynthesis. This Brachyspira hyodysenteriae (strain ATCC 49526 / WA1) protein is Elongation factor Tu.